The chain runs to 662 residues: Transcription activator of gluconeogenesis NECHADRAFT_59099 (662 aa).

The tract at residues 1–61 is disordered; the sequence is MPHEMEENGA…KDPLRPRRKK (61 aa). Basic and acidic residues-rich tracts occupy residues 25–34 and 43–56; these read TFLKDDEKMT and TEVK…DPLR. A DNA-binding region (zn(2)-C6 fungal-type) is located at residues 66–94; the sequence is CFACQRAHLTCGDERPCQRCIKRGLADAC. Disordered regions lie at residues 105–149, 502–524, and 580–606; these read LHDA…TGSN, YSGR…MTTP, and YRAP…SSRV. Polar residues-rich tracts occupy residues 121 to 130 and 137 to 149; these read YNPTPTPSRT and SSQS…TGSN. Residues 448 to 519 enclose the PAS domain; that stretch reads TLVEYDDFLQ…TNTPDHNSQG (72 aa). The segment covering 582–593 has biased composition (basic and acidic residues); that stretch reads APQDPDQKEPGS.

This sequence belongs to the ERT1/acuK family.

It is found in the nucleus. Functionally, transcription factor which regulates nonfermentable carbon utilization. Activator of gluconeogenetic genes. This is Transcription activator of gluconeogenesis NECHADRAFT_59099 from Fusarium vanettenii (strain ATCC MYA-4622 / CBS 123669 / FGSC 9596 / NRRL 45880 / 77-13-4) (Fusarium solani subsp. pisi).